The chain runs to 548 residues: Eukaryotic translation initiation factor 3 subunit D (548 aa).

Position 53 is an N6-acetyllysine (lysine 53). Serine 161 carries the post-translational modification Phosphoserine. An RNA gate region spans residues 285–299; the sequence is DFDLLTVSETANEPP. Positions 523–548 are disordered; it reads PDGTFSSDEDEEEEEEEEEEEEEEET. A phosphoserine mark is found at serine 528 and serine 529. Positions 529–548 are enriched in acidic residues; it reads SDEDEEEEEEEEEEEEEEET.

Belongs to the eIF-3 subunit D family. Component of the eukaryotic translation initiation factor 3 (eIF-3) complex, which is composed of 13 subunits: EIF3A, EIF3B, EIF3C, EIF3D, EIF3E, EIF3F, EIF3G, EIF3H, EIF3I, EIF3J, EIF3K, EIF3L and EIF3M. The eIF-3 complex appears to include 3 stable modules: module A is composed of EIF3A, EIF3B, EIF3G and EIF3I; module B is composed of EIF3F, EIF3H, and EIF3M; and module C is composed of EIF3C, EIF3D, EIF3E, EIF3K and EIF3L. EIF3C of module C binds EIF3B of module A and EIF3H of module B, thereby linking the three modules. EIF3J is a labile subunit that binds to the eIF-3 complex via EIF3B. The eIF-3 complex interacts with RPS6KB1 under conditions of nutrient depletion. Mitogenic stimulation leads to binding and activation of a complex composed of MTOR and RPTOR, leading to phosphorylation and release of RPS6KB1 and binding of EIF4B to eIF-3. As to quaternary structure, (Microbial infection) Interacts with Norwalk virus VPg protein.

The protein localises to the cytoplasm. In terms of biological role, mRNA cap-binding component of the eukaryotic translation initiation factor 3 (eIF-3) complex, a complex required for several steps in the initiation of protein synthesis of a specialized repertoire of mRNAs. The eIF-3 complex associates with the 40S ribosome and facilitates the recruitment of eIF-1, eIF-1A, eIF-2:GTP:methionyl-tRNAi and eIF-5 to form the 43S pre-initiation complex (43S PIC). The eIF-3 complex stimulates mRNA recruitment to the 43S PIC and scanning of the mRNA for AUG recognition. The eIF-3 complex is also required for disassembly and recycling of post-termination ribosomal complexes and subsequently prevents premature joining of the 40S and 60S ribosomal subunits prior to initiation. The eIF-3 complex specifically targets and initiates translation of a subset of mRNAs involved in cell proliferation, including cell cycling, differentiation and apoptosis, and uses different modes of RNA stem-loop binding to exert either translational activation or repression. In the eIF-3 complex, EIF3D specifically recognizes and binds the 7-methylguanosine cap of a subset of mRNAs. (Microbial infection) In case of FCV infection, plays a role in the ribosomal termination-reinitiation event leading to the translation of VP2. This Homo sapiens (Human) protein is Eukaryotic translation initiation factor 3 subunit D.